Consider the following 125-residue polypeptide: Large ribosomal subunit protein bL12 (125 aa).

This sequence belongs to the bacterial ribosomal protein bL12 family. In terms of assembly, homodimer. Part of the ribosomal stalk of the 50S ribosomal subunit. Forms a multimeric L10(L12)X complex, where L10 forms an elongated spine to which 2 to 4 L12 dimers bind in a sequential fashion. Binds GTP-bound translation factors.

Its function is as follows. Forms part of the ribosomal stalk which helps the ribosome interact with GTP-bound translation factors. Is thus essential for accurate translation. This is Large ribosomal subunit protein bL12 from Rickettsia conorii (strain ATCC VR-613 / Malish 7).